Reading from the N-terminus, the 320-residue chain is Porphobilinogen deaminase (320 aa).

C248 bears the S-(dipyrrolylmethanemethyl)cysteine mark.

Belongs to the HMBS family. In terms of assembly, monomer. Dipyrromethane is required as a cofactor.

It carries out the reaction 4 porphobilinogen + H2O = hydroxymethylbilane + 4 NH4(+). It participates in porphyrin-containing compound metabolism; protoporphyrin-IX biosynthesis; coproporphyrinogen-III from 5-aminolevulinate: step 2/4. The protein operates within porphyrin-containing compound metabolism; chlorophyll biosynthesis. Functionally, tetrapolymerization of the monopyrrole PBG into the hydroxymethylbilane pre-uroporphyrinogen in several discrete steps. In Synechococcus elongatus (strain ATCC 33912 / PCC 7942 / FACHB-805) (Anacystis nidulans R2), this protein is Porphobilinogen deaminase.